The primary structure comprises 245 residues: Haloacid dehalogenase-like hydrolase domain-containing protein At2g33255 (245 aa).

Thr2 carries the post-translational modification N-acetylalanine. Asp39 acts as the Nucleophile in catalysis. Mg(2+)-binding residues include Asp39, Asp41, and Asp186. The active-site Proton donor is Asp41.

It belongs to the HAD-like hydrolase superfamily. DOG/GPP family. Mg(2+) is required as a cofactor.

The sequence is that of Haloacid dehalogenase-like hydrolase domain-containing protein At2g33255 from Arabidopsis thaliana (Mouse-ear cress).